The sequence spans 382 residues: Serine protease 43 (382 aa).

The first 27 residues, 1-27 (MGGFCGADRGGFLALLVWLQLLQPLFS), serve as a signal peptide directing secretion. Positions 30-97 (YKPREDSGVM…SGTTTKITLE (68 aa)) are disordered. 2 stretches are compositionally biased toward polar residues: residues 56–68 (AQQS…SISH) and 85–95 (GSPSGTTTKIT). The Peptidase S1 domain maps to 119–355 (VDPGSLSAGR…YNEWVSYVLS (237 aa)). A disulfide bond links C144 and C160. Catalysis depends on charge relay system residues H159 and D205. 3 disulfide bridges follow: C239–C313, C272–C293, and C303–C331. S307 serves as the catalytic Charge relay system. The chain crosses the membrane as a helical span at residues 362 to 382 (PMGVLVLYLSLVFPLALLVAL).

Belongs to the peptidase S1 family. In terms of tissue distribution, testis-specific. Expressed in germ cells at the stages from late pachytene spermatocytes to spermatids.

The protein localises to the cell membrane. In terms of biological role, plays a role in spermatogenesis. Involved in germ cell survival during meiosis. Lacks protease activity in vitro. In Mus musculus (Mouse), this protein is Serine protease 43.